The sequence spans 270 residues: UPF0354 protein BcerKBAB4_4524 (270 aa).

This sequence belongs to the UPF0354 family.

In Bacillus mycoides (strain KBAB4) (Bacillus weihenstephanensis), this protein is UPF0354 protein BcerKBAB4_4524.